Here is a 472-residue protein sequence, read N- to C-terminus: 3-isopropylmalate dehydratase large subunit (472 aa).

Positions 289 to 312 (TWGTNPAQGTGVSQVVPSPDDAKD) are disordered. The segment covering 290-304 (WGTNPAQGTGVSQVV) has biased composition (polar residues). C347, C407, and C410 together coordinate [4Fe-4S] cluster.

The protein belongs to the aconitase/IPM isomerase family. LeuC type 1 subfamily. In terms of assembly, heterodimer of LeuC and LeuD. Requires [4Fe-4S] cluster as cofactor.

It carries out the reaction (2R,3S)-3-isopropylmalate = (2S)-2-isopropylmalate. Its pathway is amino-acid biosynthesis; L-leucine biosynthesis; L-leucine from 3-methyl-2-oxobutanoate: step 2/4. Functionally, catalyzes the isomerization between 2-isopropylmalate and 3-isopropylmalate, via the formation of 2-isopropylmaleate. The sequence is that of 3-isopropylmalate dehydratase large subunit from Halalkalibacterium halodurans (strain ATCC BAA-125 / DSM 18197 / FERM 7344 / JCM 9153 / C-125) (Bacillus halodurans).